A 173-amino-acid polypeptide reads, in one-letter code: Alpha-crystallin A chain (173 aa).

Position 1 is an N-acetylmethionine (Met1). The segment at 1–63 (MDIAIQHPWF…RTVLDSGISE (63 aa)) is required for complex formation with BFSP1 and BFSP2. Gln6 carries the post-translational modification Deamidated glutamine; partial. Ser45 carries the phosphoserine modification. Residue Gln50 is modified to Deamidated glutamine; partial. The sHSP domain occupies 52-162 (LFRTVLDSGI…GHSERAIPVS (111 aa)). Lys70 bears the N6-acetyllysine mark. Gln90 bears the Deamidated glutamine; partial mark. N6-acetyllysine is present on Lys99. His100 is a binding site for Zn(2+). The residue at position 101 (Asn101) is a Deamidated asparagine; partial. Residues Glu102 and His107 each contribute to the Zn(2+) site. Ser122 carries the post-translational modification Phosphoserine. Asn123 carries the deamidated asparagine; partial modification. Residues 144–173 (PKVPSGLDAGHSERAIPVSREEKPSSAPSS) are disordered. Residues 153–167 (GHSERAIPVSREEKP) show a composition bias toward basic and acidic residues. His154 contributes to the Zn(2+) binding site. Ser162 carries an O-linked (GlcNAc) serine glycan.

It belongs to the small heat shock protein (HSP20) family. In terms of assembly, heteromer composed of three CRYAA and one CRYAB subunits. Inter-subunit bridging via zinc ions enhances stability, which is crucial as there is no protein turn over in the lens. Can also form homodimers and homotetramers (dimers of dimers) which serve as the building blocks of homooligomers. Within homooligomers, the zinc-binding motif is created from residues of 3 different molecules. His-100 and Glu-102 from one molecule are ligands of the zinc ion, and His-107 and His-154 residues from additional molecules complete the site with tetrahedral coordination geometry. Part of a complex required for lens intermediate filament formation composed of BFSP1, BFSP2 and CRYAA. In terms of processing, acetylation at Lys-70 may increase chaperone activity. Post-translationally, undergoes age-dependent proteolytical cleavage at the C-terminus.

Its subcellular location is the cytoplasm. It is found in the nucleus. Its function is as follows. Contributes to the transparency and refractive index of the lens. Acts as a chaperone, preventing aggregation of various proteins under a wide range of stress conditions. Required for the correct formation of lens intermediate filaments as part of a complex composed of BFSP1, BFSP2 and CRYAA. The polypeptide is Alpha-crystallin A chain (CRYAA) (Tapirus indicus (Asiatic tapir)).